A 550-amino-acid polypeptide reads, in one-letter code: Glucose-6-phosphate isomerase (550 aa).

E356 functions as the Proton donor in the catalytic mechanism. Catalysis depends on residues H387 and K515.

Belongs to the GPI family.

The protein resides in the cytoplasm. It carries out the reaction alpha-D-glucose 6-phosphate = beta-D-fructose 6-phosphate. The protein operates within carbohydrate biosynthesis; gluconeogenesis. Its pathway is carbohydrate degradation; glycolysis; D-glyceraldehyde 3-phosphate and glycerone phosphate from D-glucose: step 2/4. In terms of biological role, catalyzes the reversible isomerization of glucose-6-phosphate to fructose-6-phosphate. The polypeptide is Glucose-6-phosphate isomerase (Aliivibrio fischeri (strain MJ11) (Vibrio fischeri)).